Here is a 152-residue protein sequence, read N- to C-terminus: Transcriptional regulator MraZ (152 aa).

SpoVT-AbrB domains are found at residues 5–52 (TSAI…PLPE) and 81–124 (ASDC…HDTA).

Belongs to the MraZ family. In terms of assembly, forms oligomers.

It localises to the cytoplasm. Its subcellular location is the nucleoid. The chain is Transcriptional regulator MraZ from Colwellia psychrerythraea (strain 34H / ATCC BAA-681) (Vibrio psychroerythus).